The primary structure comprises 86 residues: Small ribosomal subunit protein uS17 (86 aa).

This sequence belongs to the universal ribosomal protein uS17 family. Part of the 30S ribosomal subunit.

One of the primary rRNA binding proteins, it binds specifically to the 5'-end of 16S ribosomal RNA. This chain is Small ribosomal subunit protein uS17, found in Tropheryma whipplei (strain TW08/27) (Whipple's bacillus).